Consider the following 302-residue polypeptide: Succinate--CoA ligase [ADP-forming] subunit alpha (302 aa).

Residues 17–20 (TGST), Lys-43, and 96–98 (ITE) contribute to the CoA site. Tyr-159 provides a ligand contact to substrate. The active-site Tele-phosphohistidine intermediate is the His-247.

It belongs to the succinate/malate CoA ligase alpha subunit family. As to quaternary structure, heterotetramer of two alpha and two beta subunits.

It carries out the reaction succinate + ATP + CoA = succinyl-CoA + ADP + phosphate. It catalyses the reaction GTP + succinate + CoA = succinyl-CoA + GDP + phosphate. It functions in the pathway carbohydrate metabolism; tricarboxylic acid cycle; succinate from succinyl-CoA (ligase route): step 1/1. Functionally, succinyl-CoA synthetase functions in the citric acid cycle (TCA), coupling the hydrolysis of succinyl-CoA to the synthesis of either ATP or GTP and thus represents the only step of substrate-level phosphorylation in the TCA. The alpha subunit of the enzyme binds the substrates coenzyme A and phosphate, while succinate binding and nucleotide specificity is provided by the beta subunit. The polypeptide is Succinate--CoA ligase [ADP-forming] subunit alpha (Staphylococcus epidermidis (strain ATCC 12228 / FDA PCI 1200)).